A 667-amino-acid chain; its full sequence is Protein angel homolog 1 (667 aa).

Residues Ser-77 and Ser-105 each carry the phosphoserine modification.

Belongs to the CCR4/nocturin family.

In Mus musculus (Mouse), this protein is Protein angel homolog 1.